A 195-amino-acid chain; its full sequence is Holliday junction branch migration complex subunit RuvA (195 aa).

The segment at 1-64 (MIGRIAGLLL…EDAHLLFGFM (64 aa)) is domain I. Positions 65–140 (TEPERVLFRQ…KISPAITLPE (76 aa)) are domain II. A flexible linker region spans residues 140-144 (ETGTA). The tract at residues 145 to 195 (MASSTDKDILNALSALGYNDREANWAVGQLSEGVTVSDGIMQSLRLLSKAK) is domain III.

The protein belongs to the RuvA family. In terms of assembly, homotetramer. Forms an RuvA(8)-RuvB(12)-Holliday junction (HJ) complex. HJ DNA is sandwiched between 2 RuvA tetramers; dsDNA enters through RuvA and exits via RuvB. An RuvB hexamer assembles on each DNA strand where it exits the tetramer. Each RuvB hexamer is contacted by two RuvA subunits (via domain III) on 2 adjacent RuvB subunits; this complex drives branch migration. In the full resolvosome a probable DNA-RuvA(4)-RuvB(12)-RuvC(2) complex forms which resolves the HJ.

It is found in the cytoplasm. Its function is as follows. The RuvA-RuvB-RuvC complex processes Holliday junction (HJ) DNA during genetic recombination and DNA repair, while the RuvA-RuvB complex plays an important role in the rescue of blocked DNA replication forks via replication fork reversal (RFR). RuvA specifically binds to HJ cruciform DNA, conferring on it an open structure. The RuvB hexamer acts as an ATP-dependent pump, pulling dsDNA into and through the RuvAB complex. HJ branch migration allows RuvC to scan DNA until it finds its consensus sequence, where it cleaves and resolves the cruciform DNA. The sequence is that of Holliday junction branch migration complex subunit RuvA from Nitrosomonas europaea (strain ATCC 19718 / CIP 103999 / KCTC 2705 / NBRC 14298).